A 278-amino-acid polypeptide reads, in one-letter code: Insulin-like growth factor-binding protein-like 1 (278 aa).

A signal peptide spans 1 to 25 (MPRLSLLLPLLLLLLLPLLPPLSPS). Positions 34-109 (RRPKCGPCRP…PEGTGLCVCA (76 aa)) constitute an IGFBP N-terminal domain. Intrachain disulfides connect Cys-38–Cys-63, Cys-41–Cys-65, Cys-46–Cys-66, Cys-52–Cys-69, Cys-77–Cys-91, Cys-85–Cys-106, and Cys-115–Cys-151. Residues 95-153 (AAGAAPEGTGLCVCAQRGTVCGSDGRSYPSVCALRLRARHTPRAHPGHLHKARDGPCEF) enclose the Kazal-like domain. Residues 155–259 (PVVVVPPRSV…GEAESHSTVT (105 aa)) enclose the Ig-like C2-type domain. N-linked (GlcNAc...) asparagine glycosylation is present at Asn-166. Cys-176 and Cys-243 are disulfide-bonded.

Expressed at the highest level in both brain and testis, with lower levels in the prostate, bladder and lung.

The protein localises to the secreted. In terms of biological role, IGF-binding proteins prolong the half-life of IGFs and have been shown to either inhibit or stimulate the growth promoting effects of the IGFs in cell culture. They alter the interaction of IGFs with their cell surface receptors. May be a putative tumor suppressor protein. The polypeptide is Insulin-like growth factor-binding protein-like 1 (IGFBPL1) (Homo sapiens (Human)).